The following is a 575-amino-acid chain: Epsin-1 (575 aa).

Residues Lys11, Arg25, Asn30, Arg63, and His73 each coordinate a 1,2-diacyl-sn-glycero-3-phospho-(1D-myo-inositol-4,5-bisphosphate). The ENTH domain maps to 12–144 (NIVHNYSEAE…RDEDRLREER (133 aa)). The disordered stretch occupies residues 150 to 186 (TKEKLAQTATASSAAVGSGPPPEAEQAWPQSSGEEEL). Low complexity predominate over residues 157–167 (TATASSAAVGS). 3 consecutive UIM domains span residues 183–202 (EEEL…ADQP), 208–227 (EDDV…HDKE), and 233–252 (GDDL…TGGK). The disordered stretch occupies residues 264–575 (FTTPAPPQAS…PAPNTNPFLL (312 aa)). 8 tandem repeats follow at residues 274-276 (DPW), 294-296 (DPW), 306-308 (DPW), 319-321 (DPW), 332-334 (DPW), 349-351 (DPW), 367-369 (DPW), and 377-379 (DPW). Residues 274–379 (DPWGGPASVP…APAPAFSDPW (106 aa)) form an 8 X 3 AA repeats of D-P-W region. Composition is skewed to low complexity over residues 279–299 (PASV…WGGP) and 306–316 (DPWGGAAPTPA). A compositionally biased stretch (low complexity) spans 332–346 (DPWGGTPAPAAGEGP). Residues 367 to 379 (DPWAPAPAFSDPW) are compositionally biased toward low complexity. Ser382 is modified (phosphoserine). The [DE]-X(1,2)-F-X-X-[FL]-X-X-X-R motif motif lies at 401-410 (DEFSDFDRLR). Phosphoserine is present on residues Ser418 and Ser419. Residue Thr420 is modified to Phosphothreonine. Residues Ser434, Ser446, and Ser453 each carry the phosphoserine modification. Residues 453 to 467 (SPPPAATPTPTPPTR) are compositionally biased toward pro residues. Phosphothreonine is present on residues Thr459, Thr463, and Thr469. Ser472 carries the phosphoserine modification. Position 493 is a phosphothreonine (Thr493). 2 tandem repeats follow at residues 501-503 (NPF) and 517-519 (NPF). Residues 501–573 (NPFLPSGAPP…GPPAPNTNPF (73 aa)) are 3 X 3 AA repeats of N-P-F. Residue Arg533 is modified to Omega-N-methylarginine. Positions 556-569 (GLPPMMPPGPPAPN) are enriched in pro residues. Repeat 3 spans residues 571–573 (NPF).

Belongs to the epsin family. In terms of assembly, monomer. Binds clathrin and ZBTB16/ZNF145. Binds ubiquitinated proteins. Interacts with RALBP1 in a complex also containing NUMB and TFAP2A during interphase and mitosis. Interacts with AP2B1. Interacts with UBQLN2. Interacts with ITSN1. Interacts with AP2A1 and AP2A2. Interacts with REPS2; the interaction is direct. Interacts with EPS15; the interaction is direct. Interacts with ENTREP1. Phosphorylated on serine and/or threonine residues in mitotic cells. Phosphorylation reduces interaction with REPS2, AP-2 and the membrane fraction. Depolarization of synaptosomes results in dephosphorylation. Post-translationally, ubiquitinated.

Its subcellular location is the cytoplasm. It localises to the cell membrane. The protein localises to the nucleus. It is found in the membrane. The protein resides in the clathrin-coated pit. In terms of biological role, binds to membranes enriched in phosphatidylinositol 4,5-bisphosphate (PtdIns(4,5)P2). Modifies membrane curvature and facilitates the formation of clathrin-coated invaginations. Regulates receptor-mediated endocytosis. The protein is Epsin-1 (Epn1) of Mus musculus (Mouse).